The sequence spans 1585 residues: Adhesion G protein-coupled receptor B2 (1585 aa).

Residues methionine 1 to alanine 32 form the signal peptide. Residues phenylalanine 33–leucine 936 are Extracellular-facing. N-linked (GlcNAc...) asparagine glycans are attached at residues asparagine 106, asparagine 191, and asparagine 192. Residues alanine 229–serine 238 show a composition bias toward low complexity. The segment at alanine 229–aspartate 271 is disordered. The O-linked (Xyl...) (chondroitin sulfate) serine glycan is linked to serine 266. 4 consecutive TSP type-1 domains span residues aspartate 309–proline 362, histidine 364–proline 417, glutamate 419–proline 472, and aspartate 475–proline 528. 14 disulfide bridges follow: cysteine 321–cysteine 355, cysteine 325–cysteine 361, cysteine 336–cysteine 345, cysteine 376–cysteine 411, cysteine 380–cysteine 416, cysteine 391–cysteine 401, cysteine 431–cysteine 466, cysteine 435–cysteine 471, cysteine 446–cysteine 456, cysteine 487–cysteine 522, cysteine 491–cysteine 527, cysteine 502–cysteine 512, cysteine 534–cysteine 569, and cysteine 557–cysteine 587. Asparagine 356 carries N-linked (GlcNAc...) asparagine glycosylation. The N-linked (GlcNAc...) asparagine glycan is linked to asparagine 437. N-linked (GlcNAc...) asparagine glycans are attached at residues asparagine 560 and asparagine 645. The 168-residue stretch at aspartate 757–leucine 924 folds into the GAIN-B domain. Positions serine 767–alanine 806 are disordered. A compositionally biased stretch (low complexity) spans serine 769–alanine 780. An N-linked (GlcNAc...) asparagine glycan is attached at asparagine 867. 2 cysteine pairs are disulfide-bonded: cysteine 874–cysteine 906 and cysteine 894–cysteine 908. The GPS stretch occupies residues cysteine 874–leucine 924. The helical transmembrane segment at valine 937–phenylalanine 957 threads the bilayer. Topologically, residues tryptophan 958–arginine 965 are cytoplasmic. Residues serine 966–glycine 986 form a helical membrane-spanning segment. Residues glutamine 987–glycine 994 are Extracellular-facing. The helical transmembrane segment at valine 995–leucine 1015 threads the bilayer. At threonine 1016–lysine 1036 the chain is on the cytoplasmic side. A helical transmembrane segment spans residues arginine 1037–threonine 1057. The Extracellular segment spans residues arginine 1058–tyrosine 1078. The helical transmembrane segment at alanine 1079–phenylalanine 1099 threads the bilayer. The Cytoplasmic segment spans residues asparagine 1100–arginine 1121. Residues cysteine 1122–leucine 1142 form a helical membrane-spanning segment. Residues serine 1143–serine 1153 are Extracellular-facing. A helical transmembrane segment spans residues leucine 1154–alanine 1174. Topologically, residues methionine 1175–valine 1585 are cytoplasmic. Tyrosine 1351 bears the Phosphotyrosine mark. Disordered stretches follow at residues leucine 1359 to alanine 1385, phenylalanine 1423 to methionine 1454, and tyrosine 1498 to valine 1585. The span at aspartate 1372–proline 1382 shows a compositional bias: basic and acidic residues. Polar residues predominate over residues serine 1543–leucine 1552. Residues glutamate 1575–valine 1585 are compositionally biased toward acidic residues.

This sequence belongs to the G-protein coupled receptor 2 family. Adhesion G-protein coupled receptor (ADGR) subfamily. In terms of assembly, heterodimer of 2 chains generated by proteolytic processing; the large extracellular N-terminal fragment and the membrane-bound C-terminal fragment predominantly remain associated and non-covalently linked. Interacts with GABPB2. Interacts (via carboxy-terminus) with TAX1BP3. Interacts with GNAZ. Interacts with SH3GL2. Glycosylated. Post-translationally, autoproteolytically processed at the GPS region of the GAIN-B domain; this cleavage modulates receptor activity. Additionally, furin is involved in the cleavage at another site, in the middle of the extracellular domain, generating a soluble fragment. As to expression, detected in cerebrospinal fluid (at protein level). Strongly expressed in brain. Also detected in heart, thymus, skeletal muscle, and different cell lines.

It is found in the cell membrane. The protein localises to the secreted. Receptor activity is regulated by proteolytic processing. The long N-terminal has a an inhibitory effect on the constitutive signaling activity. Removal of the N-terminal region induces an increase of the receptor activity. In terms of biological role, orphan G-protein coupled receptor involved in cell adhesion and probably in cell-cell interactions. Activates NFAT-signaling pathway, a transcription factor, via the G-protein GNAZ. Involved in angiogenesis inhibition. The protein is Adhesion G protein-coupled receptor B2 of Homo sapiens (Human).